The chain runs to 165 residues: Glycine cleavage system H protein, mitochondrial (165 aa).

Residues 57–139 enclose the Lipoyl-binding domain; sequence NAIVGISSYA…YEKGWLFKVD (83 aa). Lys-98 is subject to N6-lipoyllysine.

Belongs to the GcvH family. The glycine cleavage system is composed of four proteins: P, T, L and H. The cofactor is (R)-lipoate.

The protein resides in the mitochondrion. Its function is as follows. The glycine cleavage system catalyzes the degradation of glycine. The H protein shuttles the methylamine group of glycine from the P protein to the T protein. The chain is Glycine cleavage system H protein, mitochondrial (ppl) from Drosophila melanogaster (Fruit fly).